An 88-amino-acid polypeptide reads, in one-letter code: Small ribosomal subunit protein bS16 (88 aa).

This sequence belongs to the bacterial ribosomal protein bS16 family.

This is Small ribosomal subunit protein bS16 from Baumannia cicadellinicola subsp. Homalodisca coagulata.